Here is a 215-residue protein sequence, read N- to C-terminus: Variable small protein 6 (215 aa).

Residues 1–18 (MRKRISAIIMTLFMVFMS) form the signal peptide. Cysteine 19 carries the N-palmitoyl cysteine lipid modification. Cysteine 19 carries S-diacylglycerol cysteine lipidation.

It belongs to the variable small protein (Vsp) family.

It is found in the cell outer membrane. Functionally, the Vlp and Vsp proteins are antigenically distinct proteins, only one vlp or vsp gene is transcriptionally active at any one time. Switching between these genes is a mechanism of host immune response evasion. In Borrelia hermsii, this protein is Variable small protein 6.